The following is a 409-amino-acid chain: MNNEETEVKPWIVRIILIVGGLFGAHRLYLKQVPEAFVFFSTLGVLLIGWLYDSFMFKYEVNEYNQLINQSENNKEKEKWKNGKMQASQSKFVDFSFTRFLYSVLYGSYIGLATWLACTVTFGWTDINLIPFICVVALGITAGIYIIGQCGGQSRELSYIWMASFSSMFIMVRLAQTTVFRAIFLTAIVSTVIGNRSARLKKRRHTWKHFLFWSSLFLMLVCVILLGCSRKVADKQVTATRPGTFRETISVGSLIRDRIFDAKKVHSFFEGNPIIEYHSKSDIKNKNGEKTLKNSSFWYQVWSGELFDELTGAAHLTKIDWIELTTTFIVDVLRSEARVIDGSSTIEPFKWALWRNYLIHRFSLDPLISDDRLRTECKKWQTEEKSKKGNVDRDYNILAAKQGCSTFLL.

One can recognise a TM2 domain in the interval 8 to 55; sequence VKPWIVRIILIVGGLFGAHRLYLKQVPEAFVFFSTLGVLLIGWLYDSF. Transmembrane regions (helical) follow at residues 10-30, 37-57, 104-124, 127-147, 168-190, and 209-229; these read PWIV…RLYL, FVFF…SFMF, VLYG…TFGW, INLI…IYII, MFIM…AIVS, and HFLF…LGCS.

The protein belongs to the TM2 family.

It localises to the membrane. This Caenorhabditis elegans protein is TM2 domain-containing protein ZK858.5.